A 435-amino-acid polypeptide reads, in one-letter code: Serine carboxypeptidase-like 16 (435 aa).

The first 23 residues, 1–23 (MGSWIPKLLLLQLVLLLTKHADS), serve as a signal peptide directing secretion. Cystine bridges form between C82-C325, C246-C260, and C284-C291. N103 carries N-linked (GlcNAc...) asparagine glycosylation. Residue S178 is part of the active site. Residue N305 is glycosylated (N-linked (GlcNAc...) asparagine). The active site involves D360. A glycan (N-linked (GlcNAc...) asparagine) is linked at N376. The active site involves H413.

The protein belongs to the peptidase S10 family. Expressed in seedlings, roots and leaves.

It localises to the secreted. Functionally, probable carboxypeptidase. This chain is Serine carboxypeptidase-like 16 (SCPL16), found in Arabidopsis thaliana (Mouse-ear cress).